The primary structure comprises 367 residues: Deoxyhypusine synthase-like protein (367 aa).

The interval 1-23 is disordered; the sequence is MKSLFQRRASKVRETEAMNAPVP.

This sequence belongs to the deoxyhypusine synthase family.

This Caulobacter vibrioides (strain ATCC 19089 / CIP 103742 / CB 15) (Caulobacter crescentus) protein is Deoxyhypusine synthase-like protein.